Here is a 221-residue protein sequence, read N- to C-terminus: Protein-L-isoaspartate O-methyltransferase (221 aa).

The active site involves serine 70.

Belongs to the methyltransferase superfamily. L-isoaspartyl/D-aspartyl protein methyltransferase family.

The protein resides in the cytoplasm. It catalyses the reaction [protein]-L-isoaspartate + S-adenosyl-L-methionine = [protein]-L-isoaspartate alpha-methyl ester + S-adenosyl-L-homocysteine. Catalyzes the methyl esterification of L-isoaspartyl residues in peptides and proteins that result from spontaneous decomposition of normal L-aspartyl and L-asparaginyl residues. It plays a role in the repair and/or degradation of damaged proteins. The chain is Protein-L-isoaspartate O-methyltransferase from Alkalilimnicola ehrlichii (strain ATCC BAA-1101 / DSM 17681 / MLHE-1).